A 399-amino-acid chain; its full sequence is Argininosuccinate synthase (399 aa).

Residue 8–16 participates in ATP binding; that stretch reads AYSGGLDTS. Tyr87 is an L-citrulline binding site. Gly117 lines the ATP pocket. L-aspartate-binding residues include Thr119, Asn123, and Asp124. Residue Asn123 coordinates L-citrulline. L-citrulline contacts are provided by Arg127, Ser175, Glu259, and Tyr271.

This sequence belongs to the argininosuccinate synthase family. Type 1 subfamily. As to quaternary structure, homotetramer.

The protein localises to the cytoplasm. The catalysed reaction is L-citrulline + L-aspartate + ATP = 2-(N(omega)-L-arginino)succinate + AMP + diphosphate + H(+). It participates in amino-acid biosynthesis; L-arginine biosynthesis; L-arginine from L-ornithine and carbamoyl phosphate: step 2/3. This Corynebacterium diphtheriae (strain ATCC 700971 / NCTC 13129 / Biotype gravis) protein is Argininosuccinate synthase.